Reading from the N-terminus, the 288-residue chain is Small ribosomal subunit protein uS2 (288 aa).

It belongs to the universal ribosomal protein uS2 family. In terms of assembly, component of the small ribosomal subunit. Mature ribosomes consist of a small (40S) and a large (60S) subunit. The 40S subunit contains about 33 different proteins and 1 molecule of RNA (18S). The 60S subunit contains about 49 different proteins and 3 molecules of RNA (28S, 5.8S and 5S). Interacts with ribosomal protein S21.

The protein resides in the cytoplasm. Its function is as follows. Required for the assembly and/or stability of the 40S ribosomal subunit. Required for the processing of the 20S rRNA-precursor to mature 18S rRNA in a late step of the maturation of 40S ribosomal subunits. The chain is Small ribosomal subunit protein uS2 from Aedes aegypti (Yellowfever mosquito).